Here is a 10287-residue protein sequence, read N- to C-terminus: Putative E3 ubiquitin-protein ligase protein PFF1365c (10287 aa).

Residues 47–82 (TRFFKSISNYGEFLLLQSSSRVISSYEHILRLLHQA) form a TPR 1 repeat. The segment covering 566–589 (TNKSRDNINQNTNTNNNNNNNNNN) has biased composition (low complexity). The segment at 566–592 (TNKSRDNINQNTNTNNNNNNNNNNDGD) is disordered. One copy of the TPR 2 repeat lies at 631–665 (YPMFLKIQNKPQRCLKDISKPCEYYSNTLPIYGSY). Disordered stretches follow at residues 740–823 (KSSV…NKKK), 1221–1251 (NNSN…SSSS), and 1599–1670 (YVDD…DDNN). Low complexity-rich tracts occupy residues 767-810 (KANN…NNNN), 1221-1235 (NNSN…THNS), and 1242-1251 (SSSTYSSSSS). The span at 1601–1635 (DDNEEDEGEEDKSEDYEYCDDEQQNDVYEDTEEES) shows a compositional bias: acidic residues. Positions 1641-1653 (RKERRVHQKKKNS) are enriched in basic residues. Residues 1654 to 1670 (KVSINKKTNNSLSDDNN) are compositionally biased toward low complexity. Helical transmembrane passes span 1821 to 1841 (ACTF…TLFV), 1860 to 1880 (LKMA…GLLT), and 1900 to 1920 (ECCI…TIMI). Over residues 2070-2080 (SRRGIPLKKKS) the composition is skewed to basic residues. Residues 2070 to 2112 (SRRGIPLKKKSERNNSKEENVNNMDHNNNNNSNSNNNNFFHRG) form a disordered region. The segment covering 2090–2107 (VNNMDHNNNNNSNSNNNN) has biased composition (low complexity). The stretch at 2116 to 2145 (TNPRNNNITCDRKNMEFLKKLMKNDHDAVQ) is one ANK 1 repeat. One copy of the TPR 3 repeat lies at 2141-2175 (HDAVQCLGKAYSVFHKNFERAQIAFVAVFLHLTGY). Residues 2854-2865 (NLSSNKRSQKGY) are compositionally biased toward polar residues. Disordered stretches follow at residues 2854–2945 (NLSS…SKEP), 3087–3113 (KNRN…NNIN), 3303–3344 (NGHT…NDRG), 3561–3599 (FSKG…SSIN), 3942–3998 (TMEN…KDHI), 4076–4157 (LFNS…INYY), 4695–4716 (EKKN…KEEG), 4886–4972 (SPYF…LRNS), and 4984–5051 (YRNK…SNAD). Residues 2886 to 2929 (SLDKYNDKEKKNDKINNGDTKNSDDGKIDMDDKKYYNDDLKNSD) are compositionally biased toward basic and acidic residues. The span at 3090–3113 (NSNNNNNNNNTNNSNNSNNNNNIN) shows a compositional bias: low complexity. A compositionally biased stretch (acidic residues) spans 3316-3335 (YDDDNCDNYDNYDNDNENDN). Basic and acidic residues-rich tracts occupy residues 3567–3579 (KKEM…EKIK) and 3965–3974 (PSKDKSKHYN). Positions 3975 to 3992 (DNNNNNNDDNNSNNNNDY) are enriched in low complexity. Residues 4079-4094 (SKKDGSSNNDKNDNSN) are compositionally biased toward basic and acidic residues. Composition is skewed to low complexity over residues 4095–4116 (KNRN…NNNN) and 4124–4157 (NINN…INYY). Residues 4906-4917 (YNIQNSDNSNIG) show a composition bias toward polar residues. 2 stretches are compositionally biased toward low complexity: residues 4918–4942 (DSEL…DSLN) and 4953–4972 (NSSS…LRNS). Residues 5026-5045 (KIKKNKSYKNKTHKNKKQKN) are compositionally biased toward basic residues. 5 helical membrane-spanning segments follow: residues 5058–5078 (LYGY…CIIL), 5106–5126 (FIKL…KYFA), 5552–5572 (EEIL…YYLG), 5716–5736 (LPIF…VVYI), and 5815–5835 (FLSY…NQII). The disordered stretch occupies residues 5848 to 5917 (VNKNKGNDNV…NNNNVRNSNN (70 aa)). One copy of the ANK 2 repeat lies at 6004 to 6032 (GINSLYVNGTNGNLKTDKILLHNFSNFDL). One copy of the TPR 4 repeat lies at 6051–6084 (LVHYFACAAYYIKRADVYNIMNYYNEHTHANFKQ). Disordered regions lie at residues 6495-6527 (EEEK…HEKK), 7123-7147 (EKKK…DNNR), and 7183-7217 (NKNN…CSNS). The segment covering 6501–6527 (ENEKEVEKDENVHDEKDKVEQIEHEKK) has biased composition (basic and acidic residues). Polar residues predominate over residues 7129–7147 (GSNNIGSNTNIHELSDNNR). 2 TPR repeats span residues 7347–7380 (SNDS…KPFI) and 7577–7610 (NNNN…YDDI). The span at 7571 to 7583 (DDGNNNNNNNDSM) shows a compositional bias: low complexity. Disordered regions lie at residues 7571–7590 (DDGN…KDDM) and 7653–7712 (SNER…VNNI). Over residues 7696 to 7706 (DNNKDKDDGNH) the composition is skewed to basic and acidic residues. 3 ANK repeats span residues 7809 to 7839 (KYLT…NPNK), 7845 to 7875 (EKET…QVNK), and 7880 to 7917 (GNTA…DLTI). Disordered stretches follow at residues 8208–8300 (LKDD…SAKN) and 8413–8448 (ALNS…NNYN). Over residues 8219-8259 (YQKPYDKKVINKNKNDNYDKNDNYDKKDNYDTNDKNDKNNC) the composition is skewed to basic and acidic residues. Residues 8277–8300 (VMNTNSSGRRTISKNSPNLSSAKN) show a composition bias toward polar residues. Residues 8415 to 8448 (NSNMSNNNNNNNNSNNNNNNNSNNNNNNYNNNYN) are compositionally biased toward low complexity. 2 TPR repeats span residues 8782–8815 (QTCD…SNNI) and 9550–9584 (DLPI…ITSS). Disordered stretches follow at residues 9795 to 9818 (MGSD…HKYD) and 9913 to 9979 (NVLL…SKNT). Basic and acidic residues-rich tracts occupy residues 9800–9818 (ILKD…HKYD) and 9913–9930 (NVLL…DDIR). The span at 9931–9971 (NNMNNNNNNNNNNNNNNNNNNNNNNNNNNNNNNNNNNNNLN) shows a compositional bias: low complexity. The HECT domain maps to 9938-10273 (NNNNNNNNNN…IKNCTAIDLD (336 aa)). C10241 functions as the Glycyl thioester intermediate in the catalytic mechanism.

The protein localises to the membrane. It carries out the reaction S-ubiquitinyl-[E2 ubiquitin-conjugating enzyme]-L-cysteine + [acceptor protein]-L-lysine = [E2 ubiquitin-conjugating enzyme]-L-cysteine + N(6)-ubiquitinyl-[acceptor protein]-L-lysine.. It participates in protein modification; protein ubiquitination. Functionally, putative E3 ubiquitin-protein ligase. The protein is Putative E3 ubiquitin-protein ligase protein PFF1365c of Plasmodium falciparum (isolate 3D7).